A 100-amino-acid polypeptide reads, in one-letter code: Secreted protein of Ly-6 domain 1 (100 aa).

Residues 1–22 (MAKCLLLLLLVVLSSLLGLPQA) form the signal peptide. Residues 23–100 (LECFQCNRVN…CHDSPLCNKF (78 aa)) form the UPAR/Ly6 domain. 5 disulfide bridges follow: Cys25/Cys52, Cys28/Cys37, Cys44/Cys70, Cys74/Cys90, and Cys91/Cys97. Asn60 carries N-linked (GlcNAc...) asparagine glycosylation.

In terms of processing, glycosylated. As to expression, expressed in placenta, where it is detected in both fetal tissues (cotyledon and intercotyledon) and maternal tissues (caruncle and intercaruncular endometrium) (at protein level). Expressed in the mesenchyme area of villi in the cotyledon (at protein level). In endometrium, expressed in the luminal epithelium and weakly in the subluminal stroma (at protein level). Detected in trophoblast mononucleate cells (TMCs) (at protein level). Also detected in trophoblast binucleate cells (BNCs). Overall, expression is strongest in fetal tissue and lower in maternal tissue. Not detected in other tissues tested.

It localises to the secreted. Binds specifically to type I collagen. This Bos taurus (Bovine) protein is Secreted protein of Ly-6 domain 1.